We begin with the raw amino-acid sequence, 156 residues long: Large ribosomal subunit protein uL22 (156 aa).

This sequence belongs to the universal ribosomal protein uL22 family. In terms of assembly, part of the 50S ribosomal subunit.

This protein binds specifically to 23S rRNA. It makes multiple contacts with different domains of the 23S rRNA in the assembled 50S subunit and ribosome. Functionally, the globular domain of the protein is located near the polypeptide exit tunnel on the outside of the subunit, while an extended beta-hairpin is found that lines the wall of the exit tunnel in the center of the 70S ribosome. The chain is Large ribosomal subunit protein uL22 from Aeropyrum pernix (strain ATCC 700893 / DSM 11879 / JCM 9820 / NBRC 100138 / K1).